A 99-amino-acid chain; its full sequence is PqqA binding protein (99 aa).

It belongs to the PqqD family. In terms of assembly, monomer. Interacts with PqqE.

The protein operates within cofactor biosynthesis; pyrroloquinoline quinone biosynthesis. In terms of biological role, functions as a PqqA binding protein and presents PqqA to PqqE, in the pyrroloquinoline quinone (PQQ) biosynthetic pathway. This Acinetobacter baylyi (strain ATCC 33305 / BD413 / ADP1) protein is PqqA binding protein.